Reading from the N-terminus, the 458-residue chain is Histone acetyltransferase KAT8 (458 aa).

Low complexity-rich tracts occupy residues 1 to 17 (MAAQ…TSGT) and 25 to 35 (PGENAAVEGPA). Positions 1–52 (MAAQGATAAVAATTSGTVGEGEPGPGENAAVEGPARSPGRVSPPTPARGEPE) are disordered. The residue at position 2 (Ala2) is an N-acetylalanine. Ser37 and Ser42 each carry phosphoserine. The Tudor-knot domain occupies 55-110 (VEIGETYLCRRPDSTWHSAEVIQSRVNDQEGREEFYVHYVGFNRRLDEWVDKNRLA). The residue at position 113 (Lys113) is an N6-acetyllysine. The Nuclear localization signal signature appears at 140-149 (RNQKRKHDEI). The 274-residue stretch at 174-447 (TKVKYVDKIH…VDSVCLKWAP (274 aa)) folds into the MYST-type HAT domain. Residues 174 to 458 (TKVKYVDKIH…KHKQVKLSKK (285 aa)) form a sufficient for interaction with KANSL1 region. The C2HC MYST-type zinc finger occupies 207–232 (LWLCEYCLKYMKFEKSYRFHLGQCQW). Residues Cys210, Cys213, His226, and Cys230 each contribute to the Zn(2+) site. The residue at position 274 (Lys274) is an N6-acetyllysine. Positions 317, 319, 325, 326, 327, 329, and 330 each coordinate acetyl-CoA. Position 348 is a phosphoserine (Ser348). Glu350 serves as the catalytic Proton donor/acceptor. Residues Ser354, Ser363, Tyr408, and Lys432 each coordinate acetyl-CoA.

It belongs to the MYST (SAS/MOZ) family. As to quaternary structure, component of a multisubunit histone acetyltransferase complex (MSL) at least composed of the MOF/KAT8, MSL1/hampin, MSL2L1 and MSL3L1. Component of the NSL complex at least composed of MOF/KAT8, KANSL1, KANSL2, KANSL3, MCRS1, PHF20, OGT1/OGT, WDR5 and HCFC1. Component of some MLL1/MLL complex, at least composed of the core components KMT2A/MLL1, ASH2L, HCFC1, WDR5 and RBBP5, as well as the facultative components BACC1, CHD8, E2F6, HSP70, INO80C, KANSL1, LAS1L, MAX, MCRS1, MGA, MOF/KAT8, PELP1, PHF20, PRP31, RING2, RUVB1/TIP49A, RUVB2/TIP49B, SENP3, TAF1, TAF4, TAF6, TAF7, TAF9 and TEX10. Interacts with the chromodomain of MORF4L1/MRG15. Interacts with ATM (via its Tudor-knot domain); possibly regulating the activity of ATM. Interacts with NELFD. Acetylation at Lys-274 facilitates cognate substrate Lys-binding and acetylation. Although considered as an autoacetylation event, acetylation at Lys-274 probably takes place via a non-enzymatic process following acetyl-CoA-binding, which primes KAT8 for cognate protein-lysine acetylation. In terms of tissue distribution, during oocyte development, expressed in both oocytes and granulosa cells.

The protein localises to the nucleus. It is found in the chromosome. Its subcellular location is the mitochondrion. The enzyme catalyses L-lysyl-[histone] + acetyl-CoA = N(6)-acetyl-L-lysyl-[histone] + CoA + H(+). It catalyses the reaction L-lysyl-[protein] + acetyl-CoA = N(6)-acetyl-L-lysyl-[protein] + CoA + H(+). The catalysed reaction is propanoyl-CoA + L-lysyl-[protein] = N(6)-propanoyl-L-lysyl-[protein] + CoA + H(+). With respect to regulation, the acetyltransferase activity is inhibited by anacardic acid derivatives. Histone acetyltransferase that catalyzes histone H4 acetylation at 'Lys-5'- and 'Lys-8' (H4K5ac and H4K8ac) or 'Lys-16' (H4K16ac), depending on the context. Catalytic component of the MSL histone acetyltransferase complex, a multiprotein complex that mediates the majority of histone H4 acetylation at 'Lys-16' (H4K16ac), an epigenetic mark that prevents chromatin compaction. H4K16ac constitutes the only acetylation mark intergenerationally transmitted and regulates key biological processes, such as oogenesis, embryonic stem cell pluripotency, hematopoiesis or glucose metabolism. The MSL complex is required for chromosome stability and genome integrity by maintaining homeostatic levels of H4K16ac. The MSL complex is also involved in gene dosage by promoting up-regulation of genes expressed by the X chromosome. X up-regulation is required to compensate for autosomal biallelic expression. The MSL complex also participates in gene dosage compensation by promoting expression of Tsix non-coding RNA. As part of the NSL histone acetyltransferase complex, catalyzes histone H4 acetylation at 'Lys-5'- and 'Lys-8' (H4K5ac and H4K8ac) at transcription start sites and promotes transcription initiation. The NSL complex also acts as a regulator of gene expression in mitochondria: KAT8 associates with mitochondrial DNA and controls expression of respiratory genes in an acetyltransferase-dependent mechanism. Also functions as an acetyltransferase for non-histone targets, such as ALKBH5, COX17, IRF3, KDM1A/LSD1, LMNA, PAX7 or TP53/p53. Acts as an inhibitor of antiviral immunity by acetylating IRF3, preventing IRF3 recruitment to promoters. Acts as a regulator of asymmetric division in muscle stem cells by mediating acetylation of PAX7. As part of the NSL complex, acetylates TP53/p53 at 'Lys-120'. Acts as a regulator of epithelial-to-mesenchymal transition as part of the NSL complex by mediating acetylation of KDM1A/LSD1. The NSL complex is required for nuclear architecture maintenance by mediating acetylation of LMNA. Promotes mitochondrial integrity by catalyzing acetylation of COX17. In addition to protein acetyltransferase activity, able to mediate protein propionylation. In Mus musculus (Mouse), this protein is Histone acetyltransferase KAT8.